The following is a 540-amino-acid chain: Putative serine protease F56F10.1 (540 aa).

An N-terminal signal peptide occupies residues Met-1–Ala-16. N-linked (GlcNAc...) asparagine glycans are attached at residues Asn-58 and Asn-87. Ser-182 acts as the Charge relay system in catalysis. 6 N-linked (GlcNAc...) asparagine glycosylation sites follow: Asn-270, Asn-300, Asn-317, Asn-343, Asn-441, and Asn-449. Asp-453 serves as the catalytic Charge relay system. Asn-475 carries an N-linked (GlcNAc...) asparagine glycan. His-479 (charge relay system) is an active-site residue.

It belongs to the peptidase S28 family.

The chain is Putative serine protease F56F10.1 from Caenorhabditis elegans.